Consider the following 471-residue polypeptide: MRRGERRVAGGSGSESPLLEGRRSTESEVYDDGTNTFFWRAHTLTVLFILTCALGYVTLLEETPQDTAYNTKRGIVASILVFLCFGVTQAKDGPFSRPHPAYWRFWLCVSVVYELFLIFILFQTVHDGRQFLKYVDPRLGVPLPERDYGGNCLIYDADNKTDPFHNIWDKLDGFVPAHFIGWYLKTLMIRDWWMCMIISVMFEFLEYSLEHQLPNFSECWWDHWIMDVLLCNGLGIYCGMKTLEWLSLKTYKWQGLWNIPTYKGKMKRIAFQFTPYSWVRFEWKPASSLHRWLAVCGIILVFLLAELNTFYLKFVLWMPPEHYLVLLRLVFFVNVGGVAMREIYDFMDELKPHRKLGQQAWLVAAITVTELLIVVKYDPHTLTLSLPFYISQCWTLGSILVLTWTVWRFFLRDITMRYKETRRQKQQSHQAINNGDGHPGPEDDLPGTGTAEEEGTTNDGVPAEEGPSAAS.

The tract at residues 1–26 (MRRGERRVAGGSGSESPLLEGRRSTE) is disordered. The Cytoplasmic segment spans residues 1 to 40 (MRRGERRVAGGSGSESPLLEGRRSTESEVYDDGTNTFFWR). Phosphoserine occurs at positions 12, 14, and 16. A helical membrane pass occupies residues 41 to 61 (AHTLTVLFILTCALGYVTLLE). Residues 62–74 (ETPQDTAYNTKRG) lie on the Lumenal side of the membrane. Residues 75-95 (IVASILVFLCFGVTQAKDGPF) traverse the membrane as a helical segment. Over 96 to 104 (SRPHPAYWR) the chain is Cytoplasmic. A helical membrane pass occupies residues 105–125 (FWLCVSVVYELFLIFILFQTV). At 126–291 (HDGRQFLKYV…EWKPASSLHR (166 aa)) the chain is on the lumenal side. N-linked (GlcNAc...) asparagine glycosylation occurs at Asn-159. The chain crosses the membrane as a helical span at residues 292 to 312 (WLAVCGIILVFLLAELNTFYL). Position 313 (Lys-313) is a topological domain, cytoplasmic. A helical membrane pass occupies residues 314-334 (FVLWMPPEHYLVLLRLVFFVN). Residues 335–354 (VGGVAMREIYDFMDELKPHR) lie on the Lumenal side of the membrane. A helical transmembrane segment spans residues 355–375 (KLGQQAWLVAAITVTELLIVV). Residues 376-381 (KYDPHT) are Cytoplasmic-facing. Residues 382–402 (LTLSLPFYISQCWTLGSILVL) form a helical membrane-spanning segment. Topologically, residues 403–471 (TWTVWRFFLR…PAEEGPSAAS (69 aa)) are lumenal. Residues 423–471 (RQKQQSHQAINNGDGHPGPEDDLPGTGTAEEEGTTNDGVPAEEGPSAAS) form a disordered region.

The protein belongs to the phosphatidyl serine synthase family.

It is found in the endoplasmic reticulum membrane. The enzyme catalyses a 1,2-diacyl-sn-glycero-3-phosphoethanolamine + L-serine = a 1,2-diacyl-sn-glycero-3-phospho-L-serine + ethanolamine. It catalyses the reaction 1-hexadecanoyl-2-(9Z-octadecenoyl)-sn-glycero-3-phosphoethanolamine + L-serine = 1-hexadecanoyl-2-(9Z-octadecenoyl)-sn-glycero-3-phospho-L-serine + ethanolamine. It carries out the reaction 1-hexadecanoyl-2-(4Z,7Z,10Z,13Z,16Z,19Z-docosahexaenoyl)-sn-glycero-3-phosphoethanolamine + L-serine = 1-hexadecanoyl-2-(4Z,7Z,10Z,13Z,16Z,19Z-docosahexaenoyl)-sn-glycero-3-phosphoserine + ethanolamine. The catalysed reaction is 1-octadecanoyl-2-(5Z,8Z,11Z,14Z)-eicosatetraenoyl-sn-glycero-3-phosphoethanolamine + L-serine = 1-octadecanoyl-2-(5Z,8Z,11Z,14Z)-eicosatetraenoyl-sn-glycero-3-phosphoserine + ethanolamine. The enzyme catalyses 1-octadecanoyl-2-(4Z,7Z,10Z,13Z,16Z,19Z-docosahexaenoyl)-sn-glycero-3-phosphoethanolamine + L-serine = 1-octadecanoyl-2-(4Z,7Z,10Z,13Z,16Z,19Z-docosahexaenoyl)-sn-glycero-3-phosphoserine + ethanolamine. It catalyses the reaction 1-(1Z-octadecenyl)-2-(4Z,7Z,10Z,13Z,16Z,19Z-docosahexaenoyl)-sn-glycero-3-phosphoethanolamine + L-serine = 1-(1Z-octadecenyl)-2-(4Z,7Z,10Z,13Z,16Z,19Z-docosahexaenoyl)-sn-glycero-3-phospho-L-serine + ethanolamine. It carries out the reaction 1-octadecanoyl-2-(9Z-octadecenoyl)-sn-glycero-3-phosphoethanolamine + L-serine = 1-octadecanoyl-2-(9Z-octadecenoyl)-sn-glycero-3-phospho-L-serine + ethanolamine. The catalysed reaction is 1-(1Z-octadecenyl)-2-(9Z-octadecenoyl)-sn-glycero-3-phosphoethanolamine + L-serine = 1-(1Z-octadecenyl)-2-(9Z-octadecenoyl)-sn-glycero-3-phospho-L-serine + ethanolamine. The enzyme catalyses 1-(1Z-octadecenyl)-2-(5Z,8Z,11Z,14Z- eicosatetraenoyl)-sn-glycero-3-phosphoethanolamine + L-serine = 1-(1Z-octadecenyl)-2-(5Z,8Z,11Z,14Z-eicosatetraenoyl)-sn-glycero-3-phospho-L-serine + ethanolamine. Its pathway is phospholipid metabolism; phosphatidylserine biosynthesis. Its function is as follows. Catalyzes a base-exchange reaction in which the polar head group of phosphatidylethanolamine (PE) or phosphatidylcholine (PC) is replaced by L-serine. Catalyzes the conversion of phosphatatidylethanolamine and does not act on phosphatidylcholine. Can utilize both phosphatidylethanolamine (PE) plasmalogen and diacyl PE as substrate and the latter is six times better utilized, indicating the importance of an ester linkage at the sn-1 position. Although it shows no sn-1 fatty acyl preference, exhibits significant preference towards docosahexaenoic acid (22:6n-3) compared with 18:1 or 20:4 at the sn-2 position. The sequence is that of Phosphatidylserine synthase 2 (Ptdss2) from Rattus norvegicus (Rat).